A 73-amino-acid polypeptide reads, in one-letter code: Translation initiation factor IF-1 (73 aa).

Residues 1-73 form the S1-like domain; it reads MAKKQGAIEI…TRGRIVYRYK (73 aa).

Belongs to the IF-1 family. As to quaternary structure, component of the 30S ribosomal translation pre-initiation complex which assembles on the 30S ribosome in the order IF-2 and IF-3, IF-1 and N-formylmethionyl-tRNA(fMet); mRNA recruitment can occur at any time during PIC assembly.

It is found in the cytoplasm. Its function is as follows. One of the essential components for the initiation of protein synthesis. Stabilizes the binding of IF-2 and IF-3 on the 30S subunit to which N-formylmethionyl-tRNA(fMet) subsequently binds. Helps modulate mRNA selection, yielding the 30S pre-initiation complex (PIC). Upon addition of the 50S ribosomal subunit IF-1, IF-2 and IF-3 are released leaving the mature 70S translation initiation complex. The sequence is that of Translation initiation factor IF-1 from Streptomyces coelicolor (strain ATCC BAA-471 / A3(2) / M145).